Reading from the N-terminus, the 93-residue chain is Pyrimidine/purine nucleoside phosphorylase (93 aa).

Belongs to the nucleoside phosphorylase PpnP family.

The catalysed reaction is a purine D-ribonucleoside + phosphate = a purine nucleobase + alpha-D-ribose 1-phosphate. It catalyses the reaction adenosine + phosphate = alpha-D-ribose 1-phosphate + adenine. It carries out the reaction cytidine + phosphate = cytosine + alpha-D-ribose 1-phosphate. The enzyme catalyses guanosine + phosphate = alpha-D-ribose 1-phosphate + guanine. The catalysed reaction is inosine + phosphate = alpha-D-ribose 1-phosphate + hypoxanthine. It catalyses the reaction thymidine + phosphate = 2-deoxy-alpha-D-ribose 1-phosphate + thymine. It carries out the reaction uridine + phosphate = alpha-D-ribose 1-phosphate + uracil. The enzyme catalyses xanthosine + phosphate = alpha-D-ribose 1-phosphate + xanthine. Catalyzes the phosphorolysis of diverse nucleosides, yielding D-ribose 1-phosphate and the respective free bases. Can use uridine, adenosine, guanosine, cytidine, thymidine, inosine and xanthosine as substrates. Also catalyzes the reverse reactions. In Aliivibrio salmonicida (strain LFI1238) (Vibrio salmonicida (strain LFI1238)), this protein is Pyrimidine/purine nucleoside phosphorylase.